The primary structure comprises 503 residues: MEESQGYLELYKSGQHDFLYPLIFQEYIYVLAHDHGLNRSILLENLGSDNKFSSLIVKRLITRMYQQNRLIISANDSNQNPFLGHNKDLYSQIISEGFAVIVEIPFPLRLVSSLERKEIVKSHNLRSIHSVFPFLEDKFLHLNYVSDILIPHPIHLEILVQTLRYWVKDASSLHLLRFFLYEYRNWNSLINPKKSIFVFSKRNQRLFLFLYNSHVYEYESVFVFLRNQSSHLRSTSSGALLERIYFYGKIKHLVEVFANDFQAILWLFKDTFVHYVRYQGKSILASKGTPLLMNKWKYYLVNFWQCNFYVWSQPVRIYINQLSNHSLYFLGYISSVGLNPSVVRNQMLENSFIIDNAIKKFDIIVPIIPLIGSLAKAKFCNVLGHPISKPARADSSDSDIIDRFVRICRNLSHYHSGSSKKKSLYRIKYILRLSCARTLARKHKSPVRAFLKRLGSELLEEFLTEEEQVLSLIVPASSTSRRLYRGRIWYLDIICINDLANHE.

This sequence belongs to the intron maturase 2 family. MatK subfamily.

The protein localises to the plastid. The protein resides in the chloroplast. Functionally, usually encoded in the trnK tRNA gene intron. Probably assists in splicing its own and other chloroplast group II introns. The sequence is that of Maturase K from Liquidambar orientalis (Oriental sweet gum).